Reading from the N-terminus, the 318-residue chain is Oxidoreductase swnN (318 aa).

Belongs to the NmrA-type oxidoreductase family. Isoflavone reductase subfamily.

It participates in mycotoxin biosynthesis. Functionally, aminotransferase; part of the gene cluster that mediates the biosynthesis of swainsonine (SW), a cytotoxic fungal alkaloid and a potential cancer therapy drug. Swainsonine production occurs via a multibranched pathway and is dispensable for fungal colonization of plants and infection of insect hosts. The first step of swainsonine biosynthesis is the production of the precursor pipecolic acid (PA) via conversion of L-lysine (Lys) to 1-piperideine-6-carboxylate (P6C) by the aminotransferase swnA, the latter being further reduced to PA by the reductase swnR. The PKS-NRPS hybrid synthetase swnK uptakes and condensates PA and malonyl-CoA with and without skipping of the ketoreductase (KR) domain in order to produce 3 intermediates, 1-oxoindolizidine, (1S)-1-hydroxyindolizin, and (1R)-1-hydroxyindolizine; with the transisomer (1S)-1-hydroxyindolizin being predominant. The terminal thioester reductase (TE) domain of swnK is involved in reduction of the thioester bond to release the intermediate aldehydes. The oxidoreductase swnN could contribute to the reduction of 1-oxoindolizidine to (1S)-1-hydroxyindolizin and (1R)-1-hydroxyindolizine, contributing to the major route of SW production. The dioxygenase swnH2 would be responsible for the oxidization of (1R)-1-hydroxyindolizine into (1R,2S)-1,2-dihydroxyindolizine and of (1S)-1-hydroxyindolizin to yield both (1R,2S)-1,2-dihydroxyindolizine and (1S,2S)-1,2-dihydroxyindolizine. The dioxygenase swnH1 then performs the conversion of the 1,2-dihydroxyindolizine epimers to SW. The protein is Oxidoreductase swnN of Arthroderma benhamiae (strain ATCC MYA-4681 / CBS 112371) (Trichophyton mentagrophytes).